The sequence spans 701 residues: Polyribonucleotide nucleotidyltransferase (701 aa).

Positions 487 and 493 each coordinate Mg(2+). The region spanning 554–613 (PTMLAMKIDQDKIRDVIGKGGATIRAICEETKASIDIEDDGSIKIFGETKEAAEAAKQRV) is the KH domain. The 69-residue stretch at 623-691 (GKIYVGKVER…NRGRIKLSIK (69 aa)) folds into the S1 motif domain.

Belongs to the polyribonucleotide nucleotidyltransferase family. In terms of assembly, component of the RNA degradosome, which is a multiprotein complex involved in RNA processing and mRNA degradation. The cofactor is Mg(2+).

The protein resides in the cytoplasm. It catalyses the reaction RNA(n+1) + phosphate = RNA(n) + a ribonucleoside 5'-diphosphate. Involved in mRNA degradation. Catalyzes the phosphorolysis of single-stranded polyribonucleotides processively in the 3'- to 5'-direction. The sequence is that of Polyribonucleotide nucleotidyltransferase from Stutzerimonas stutzeri (strain A1501) (Pseudomonas stutzeri).